Consider the following 2890-residue polypeptide: Bifunctional DNA-directed RNA polymerase subunit beta-beta' (2890 aa).

A DNA-directed RNA polymerase subunit beta region spans residues 1-1377 (MSKKIPLKNR…DINIFGDDVD (1377 aa)). Residues 1384 to 2890 (PIVIKEDDRP…LRTLEDGPKF (1507 aa)) are DNA-directed RNA polymerase subunit beta'. Residues cysteine 1449, cysteine 1451, cysteine 1465, and cysteine 1468 each contribute to the Zn(2+) site. Aspartate 1849, aspartate 1851, and aspartate 1853 together coordinate Mg(2+). Zn(2+) contacts are provided by cysteine 2179, cysteine 2253, cysteine 2260, and cysteine 2263.

The protein in the N-terminal section; belongs to the RNA polymerase beta chain family. It in the C-terminal section; belongs to the RNA polymerase beta' chain family. As to quaternary structure, the RNAP catalytic core consists of 2 alpha, 1 beta/beta' and 1 omega subunit. When a sigma factor is associated with the core the holoenzyme is formed, which can initiate transcription. Mg(2+) serves as cofactor. Requires Zn(2+) as cofactor.

The enzyme catalyses RNA(n) + a ribonucleoside 5'-triphosphate = RNA(n+1) + diphosphate. Its function is as follows. DNA-dependent RNA polymerase catalyzes the transcription of DNA into RNA using the four ribonucleoside triphosphates as substrates. This Helicobacter pylori (strain HPAG1) protein is Bifunctional DNA-directed RNA polymerase subunit beta-beta' (rpoBC).